The following is a 423-amino-acid chain: Serine hydroxymethyltransferase (423 aa).

Residues leucine 120 and 124-126 each bind (6S)-5,6,7,8-tetrahydrofolate; that span reads GHL. Lysine 229 carries the N6-(pyridoxal phosphate)lysine modification. A (6S)-5,6,7,8-tetrahydrofolate-binding site is contributed by 353-355; it reads SPF.

The protein belongs to the SHMT family. Homodimer. It depends on pyridoxal 5'-phosphate as a cofactor.

The protein localises to the cytoplasm. The enzyme catalyses (6R)-5,10-methylene-5,6,7,8-tetrahydrofolate + glycine + H2O = (6S)-5,6,7,8-tetrahydrofolate + L-serine. It participates in one-carbon metabolism; tetrahydrofolate interconversion. Its pathway is amino-acid biosynthesis; glycine biosynthesis; glycine from L-serine: step 1/1. Catalyzes the reversible interconversion of serine and glycine with tetrahydrofolate (THF) serving as the one-carbon carrier. This reaction serves as the major source of one-carbon groups required for the biosynthesis of purines, thymidylate, methionine, and other important biomolecules. Also exhibits THF-independent aldolase activity toward beta-hydroxyamino acids, producing glycine and aldehydes, via a retro-aldol mechanism. In Synechococcus sp. (strain RCC307), this protein is Serine hydroxymethyltransferase.